Consider the following 87-residue polypeptide: Small ribosomal subunit protein bS20 (87 aa).

This sequence belongs to the bacterial ribosomal protein bS20 family.

Its function is as follows. Binds directly to 16S ribosomal RNA. The polypeptide is Small ribosomal subunit protein bS20 (Mycoplasma pneumoniae (strain ATCC 29342 / M129 / Subtype 1) (Mycoplasmoides pneumoniae)).